Consider the following 415-residue polypeptide: Adipocyte plasma membrane-associated protein (415 aa).

Positions 1–30 (MNEAEGLRQRRPLRPQVITEDSPAQEAKEG) are disordered. The Cytoplasmic portion of the chain corresponds to 1–39 (MNEAEGLRQRRPLRPQVITEDSPAQEAKEGSAYSSKVFR). The chain crosses the membrane as a helical span at residues 40–60 (VTFLTLAASLAVPLLGATVLL). Over 61-412 (DCPIDPQPIS…RSPFICRLNL (352 aa)) the chain is Extracellular. An N-linked (GlcNAc...) asparagine glycan is attached at Asn159.

It belongs to the strictosidine synthase family.

Its subcellular location is the membrane. This Gallus gallus (Chicken) protein is Adipocyte plasma membrane-associated protein (APMAP).